The following is a 558-amino-acid chain: EF-hand and coiled-coil domain-containing protein 1 (558 aa).

Residues 43–78 (GLDQYLQEVFHHLDCRGAGRLPRADFRALCAVLGLN) enclose the EF-hand domain. The span at 161–170 (LRRPRRRRRP) shows a compositional bias: basic residues. Disordered stretches follow at residues 161–183 (LRRP…YGER) and 304–395 (RSEG…QPSG). Coiled coils occupy residues 179–304 (AYGE…RGYR) and 453–495 (VEAE…LNIS).

The chain is EF-hand and coiled-coil domain-containing protein 1 (Efcc1) from Mus musculus (Mouse).